The primary structure comprises 154 residues: 6,7-dimethyl-8-ribityllumazine synthase (154 aa).

Residues phenylalanine 22, 56–58 (SFE), and 80–82 (AVI) each bind 5-amino-6-(D-ribitylamino)uracil. Residue 85 to 86 (ST) coordinates (2S)-2-hydroxy-3-oxobutyl phosphate. Catalysis depends on histidine 88, which acts as the Proton donor. Tyrosine 113 contacts 5-amino-6-(D-ribitylamino)uracil. Arginine 127 lines the (2S)-2-hydroxy-3-oxobutyl phosphate pocket.

This sequence belongs to the DMRL synthase family. Forms an icosahedral capsid composed of 60 subunits, arranged as a dodecamer of pentamers.

It catalyses the reaction (2S)-2-hydroxy-3-oxobutyl phosphate + 5-amino-6-(D-ribitylamino)uracil = 6,7-dimethyl-8-(1-D-ribityl)lumazine + phosphate + 2 H2O + H(+). It participates in cofactor biosynthesis; riboflavin biosynthesis; riboflavin from 2-hydroxy-3-oxobutyl phosphate and 5-amino-6-(D-ribitylamino)uracil: step 1/2. Its function is as follows. Catalyzes the formation of 6,7-dimethyl-8-ribityllumazine by condensation of 5-amino-6-(D-ribitylamino)uracil with 3,4-dihydroxy-2-butanone 4-phosphate. This is the penultimate step in the biosynthesis of riboflavin. This chain is 6,7-dimethyl-8-ribityllumazine synthase, found in Sulfurihydrogenibium sp. (strain YO3AOP1).